The sequence spans 218 residues: Eukaryotic translation initiation factor 4E-1 (218 aa).

The segment covering 1 to 11 (MQTEQPPKESQ) has biased composition (basic and acidic residues). 2 disordered regions span residues 1-20 (MQTE…SEPQ) and 198-218 (FSAH…RMSV). Residues 206–218 (KSGSTRAKTRMSV) are compositionally biased toward polar residues.

Belongs to the eukaryotic initiation factor 4E family. As to quaternary structure, eIF4F is a multi-subunit complex, the composition of which varies with external and internal environmental conditions. It is composed of at least eIF4A, eIF4E and eIF4G. eIF4E is also known to interact with other partners.

Recognizes and binds the 7-methylguanosine-containing mRNA cap during an early step in the initiation of protein synthesis and facilitates ribosome binding by inducing the unwinding of the mRNAs secondary structures. The chain is Eukaryotic translation initiation factor 4E-1 (tif451) from Schizosaccharomyces pombe (strain 972 / ATCC 24843) (Fission yeast).